Reading from the N-terminus, the 278-residue chain is Orotidine 5'-phosphate decarboxylase (278 aa).

The Proton donor role is filled by Lys-96.

Belongs to the OMP decarboxylase family. Type 2 subfamily.

The enzyme catalyses orotidine 5'-phosphate + H(+) = UMP + CO2. It participates in pyrimidine metabolism; UMP biosynthesis via de novo pathway; UMP from orotate: step 2/2. The sequence is that of Orotidine 5'-phosphate decarboxylase (pyrF) from Streptomyces coelicolor (strain ATCC BAA-471 / A3(2) / M145).